A 291-amino-acid chain; its full sequence is Nucleotide-binding protein RALTA_A0325 (291 aa).

8–15 is an ATP binding site; sequence GISGSGKS. 57 to 60 lines the GTP pocket; sequence DIRS.

This sequence belongs to the RapZ-like family.

In terms of biological role, displays ATPase and GTPase activities. The chain is Nucleotide-binding protein RALTA_A0325 from Cupriavidus taiwanensis (strain DSM 17343 / BCRC 17206 / CCUG 44338 / CIP 107171 / LMG 19424 / R1) (Ralstonia taiwanensis (strain LMG 19424)).